Here is a 494-residue protein sequence, read N- to C-terminus: 4-trimethylaminobutyraldehyde dehydrogenase (494 aa).

S2 carries the post-translational modification N-acetylserine; in 4-trimethylaminobutyraldehyde dehydrogenase, N-terminally processed. N6-acetyllysine; alternate is present on K30. K30 carries the post-translational modification N6-succinyllysine; alternate. K59 carries the post-translational modification N6-succinyllysine. NAD(+)-binding positions include K180 and 232 to 236; that span reads GSVPT. E254 acts as the Proton acceptor in catalysis. Residue C288 is the Nucleophile of the active site. N6-acetyllysine is present on K298. The residue at position 303 (K303) is an N6-acetyllysine; alternate. K303 is subject to N6-succinyllysine; alternate. K344 bears the N6-acetyllysine mark. NAD(+) is bound at residue E391.

This sequence belongs to the aldehyde dehydrogenase family. Homotetramer. As to expression, detected in brain (at protein level). High expression in adult liver, skeletal muscle, and kidney. Low levels in heart, pancreas, lung and brain. Expressed in all regions of the brain. Expression levels are variable in the different brain areas, with the highest levels in the spinal cord and the lowest in the occipital pole.

Its subcellular location is the cytoplasm. It localises to the cytosol. It catalyses the reaction 4-(trimethylamino)butanal + NAD(+) + H2O = 4-(trimethylamino)butanoate + NADH + 2 H(+). It carries out the reaction an aldehyde + NAD(+) + H2O = a carboxylate + NADH + 2 H(+). The catalysed reaction is 4-aminobutanal + NAD(+) + H2O = 4-aminobutanoate + NADH + 2 H(+). The enzyme catalyses formaldehyde + NAD(+) + H2O = formate + NADH + 2 H(+). It catalyses the reaction acetaldehyde + NAD(+) + H2O = acetate + NADH + 2 H(+). It carries out the reaction imidazole-4-acetaldehyde + NAD(+) + H2O = imidazole-4-acetate + NADH + 2 H(+). The catalysed reaction is acrolein + NAD(+) + H2O = acrylate + NADH + 2 H(+). The enzyme catalyses (5-hydroxyindol-3-yl)acetaldehyde + NAD(+) + H2O = (5-hydroxyindol-3-yl)acetate + NADH + 2 H(+). It catalyses the reaction 3,4-dihydroxyphenylacetaldehyde + NAD(+) + H2O = 3,4-dihydroxyphenylacetate + NADH + 2 H(+). It carries out the reaction spermine monoaldehyde + NAD(+) + H2O = N-(2-carboxyethyl)spermidine + NADH + 2 H(+). The catalysed reaction is propanal + NAD(+) + H2O = propanoate + NADH + 2 H(+). The enzyme catalyses butanal + NAD(+) + H2O = butanoate + NADH + 2 H(+). It catalyses the reaction pentanal + NAD(+) + H2O = pentanoate + NADH + 2 H(+). It carries out the reaction hexanal + NAD(+) + H2O = hexanoate + NADH + 2 H(+). Its pathway is amine and polyamine biosynthesis; carnitine biosynthesis. In terms of biological role, converts gamma-trimethylaminobutyraldehyde into gamma-butyrobetaine with high efficiency (in vitro). Can catalyze the irreversible oxidation of a broad range of aldehydes to the corresponding acids in an NAD-dependent reaction, but with low efficiency. Catalyzes the oxidation of aldehydes arising from biogenic amines and polyamines. This is 4-trimethylaminobutyraldehyde dehydrogenase (ALDH9A1) from Homo sapiens (Human).